A 306-amino-acid polypeptide reads, in one-letter code: C-type lectin domain family 10 member A (306 aa).

At 1–37 (MTMAYENFQNLGSEEKNQEAGKAPPQSFLCNILSWTH) the chain is on the cytoplasmic side. Residues 38–58 (LLLFSLGLSLLLLVVISVIGS) traverse the membrane as a helical; Signal-anchor for type II membrane protein segment. The Extracellular portion of the chain corresponds to 59 to 306 (QNSQLRRDLE…VCEMKLAKDS (248 aa)). 2 N-linked (GlcNAc...) asparagine glycosylation sites follow: N76 and N168. Residues 174–300 (CCPLHWMEHE…QRPYRWVCEM (127 aa)) form the C-type lectin domain. Cystine bridges form between C175–C186, C203–C298, and C276–C290.

In terms of assembly, homooligomer.

It is found in the membrane. Functionally, recognizes terminal galactose and N-acetylgalactosamine units. The sequence is that of C-type lectin domain family 10 member A (Clec10a) from Rattus norvegicus (Rat).